The primary structure comprises 841 residues: DNA ligase (841 aa).

Residues 33–37 (DAQYD), 82–83 (SL), and Glu114 each bind NAD(+). Lys116 serves as the catalytic N6-AMP-lysine intermediate. 4 residues coordinate NAD(+): Arg137, Glu174, Lys300, and Lys324. Positions 418, 421, 436, and 442 each coordinate Zn(2+). The region spanning 758–841 (EKTGPLDGQT…AFLGEHGQQR (84 aa)) is the BRCT domain.

Belongs to the NAD-dependent DNA ligase family. LigA subfamily. The cofactor is Mg(2+). Mn(2+) is required as a cofactor.

It catalyses the reaction NAD(+) + (deoxyribonucleotide)n-3'-hydroxyl + 5'-phospho-(deoxyribonucleotide)m = (deoxyribonucleotide)n+m + AMP + beta-nicotinamide D-nucleotide.. Its function is as follows. DNA ligase that catalyzes the formation of phosphodiester linkages between 5'-phosphoryl and 3'-hydroxyl groups in double-stranded DNA using NAD as a coenzyme and as the energy source for the reaction. It is essential for DNA replication and repair of damaged DNA. The protein is DNA ligase of Xanthomonas oryzae pv. oryzae (strain MAFF 311018).